Consider the following 601-residue polypeptide: Protein nubbin (601 aa).

The span at 1–25 (MVMSELRWHTASPEDNKNSLKRDLL) shows a compositional bias: basic and acidic residues. Disordered stretches follow at residues 1–32 (MVMSELRWHTASPEDNKNSLKRDLLKSTPTSA), 49–94 (SRSP…AKRQ), 121–158 (KQEEDYDDANGGALNLTSDNSRHSTQSPSNSVKSATAS), 351–425 (PASS…ETTD), and 581–601 (INPSLDSPTGADDDESSYMMH). A compositionally biased stretch (low complexity) spans 49–68 (SRSPSPLQSNASDCDDNNSS). The span at 135–157 (NLTSDNSRHSTQSPSNSVKSATA) shows a compositional bias: polar residues. The span at 384–415 (TPSTPTSGTQMSQGTTTPQPKTVASAAAARAA) shows a compositional bias: low complexity. Positions 421–495 (EETTDLEELE…LLQKWLDDAD (75 aa)) constitute a POU-specific domain. The segment at residues 523 to 582 (RRKKRTSIETTIRGALEKAFLANQKPTSEEITQLADRLSMEKEVVRVWFCNRRQKEKRIN) is a DNA-binding region (homeobox). The span at 591-601 (ADDDESSYMMH) shows a compositional bias: acidic residues.

This sequence belongs to the POU transcription factor family. Class-2 subfamily. In terms of tissue distribution, initial expression in cellular blastoderm stage, then in ectodermal stripes during germband extension. Broad expression in the neuroectoderm followed by limitation to discrete subsets of CNS cells, and expression in specific PNS neurons and support cells.

It is found in the nucleus. Its function is as follows. DNA-binding regulatory protein implicated in early development. Involved in neuronal cell fate decision. Repressed directly or indirectly by the BX-C homeotic proteins. This is Protein nubbin (nub) from Drosophila melanogaster (Fruit fly).